A 465-amino-acid polypeptide reads, in one-letter code: Muscarinic acetylcholine receptor M2 (465 aa).

The Extracellular portion of the chain corresponds to 1–21 (MNNSTNSSNNVALTSPYKTFE). N-linked (GlcNAc...) asparagine glycosylation is found at N2, N3, and N6. Residues 22-44 (VVFIVLVAGSLSLVTIIGNILVM) traverse the membrane as a helical segment. Topologically, residues 45-58 (VSIKVNRHLQTVNN) are cytoplasmic. Residues 59–79 (YFLFSLACADLIIGVFSMNLY) traverse the membrane as a helical segment. The Extracellular segment spans residues 80 to 96 (TLYTVIGYWPLGPVVCD). C95 and C175 are oxidised to a cystine. Residues 97–118 (LWLALDYVVSNASVMNLLIISF) form a helical membrane-spanning segment. The Important for signaling motif lies at 119-121 (DRY). Residues 119-138 (DRYFCVTKPLTYPVKRTTKM) are Cytoplasmic-facing. A helical transmembrane segment spans residues 139 to 161 (AGMMIAAAWVLSFILWAPAILFW). Residues 162–183 (QFIVGVRTVEDGECYIQFFSNA) are Extracellular-facing. The chain crosses the membrane as a helical span at residues 184-208 (AVTFGTAIAAFYLPVIIMTVLYWHI). The Cytoplasmic portion of the chain corresponds to 209–386 (SRASKSRIKK…PPSREKKVTR (178 aa)). The disordered stretch occupies residues 217–319 (KKDKKEPVAN…SVGHSKDENS (103 aa)). S231 is subject to Phosphoserine. Basic and acidic residues predominate over residues 253-269 (GLEHNKIQNGKTPRDAV). Composition is skewed to polar residues over residues 283–292 (NDSTSVSAVA) and 303–312 (DENTVSTSVG). Residues 387–409 (TILAILLAFIITWAPYNVMVLIN) form a helical membrane-spanning segment. The Extracellular portion of the chain corresponds to 410–417 (TFCAPCIP). C412 and C415 are joined by a disulfide. A helical membrane pass occupies residues 418–441 (NTVWTIGYWLCYINSTINPACYAL). Residues 435–439 (NPACY) carry the Important for signaling motif. Residues 442–465 (CNATFKKTFKHLLMCHYKNIGATR) are Cytoplasmic-facing. Residues T445, T449, and T464 each carry the phosphothreonine modification.

Belongs to the G-protein coupled receptor 1 family. Muscarinic acetylcholine receptor subfamily. CHRM2 sub-subfamily. In terms of assembly, interacts with ARRB1 and ARRB2. Interacts with RACK1; the interaction regulates CHRM2 internalization. Post-translationally, phosphorylated in response to agonist treatment.

It is found in the cell membrane. The protein resides in the postsynaptic cell membrane. In terms of biological role, the muscarinic acetylcholine receptor mediates various cellular responses, including inhibition of adenylate cyclase, breakdown of phosphoinositides and modulation of potassium channels through the action of G proteins. Primary transducing effect is adenylate cyclase inhibition. Signaling promotes phospholipase C activity, leading to the release of inositol trisphosphate (IP3); this then triggers calcium ion release into the cytosol. This is Muscarinic acetylcholine receptor M2 (CHRM2) from Bos taurus (Bovine).